The primary structure comprises 196 residues: Cell division protein SepF (196 aa).

The segment at 16 to 81 (EDDEEFNEPA…KRAGSTFTKP (66 aa)) is disordered. Over residues 56–69 (RPAQSTSKAQTQTA) the composition is skewed to polar residues.

It belongs to the SepF family. In terms of assembly, homodimer. Interacts with FtsZ.

Its subcellular location is the cytoplasm. Cell division protein that is part of the divisome complex and is recruited early to the Z-ring. Probably stimulates Z-ring formation, perhaps through the cross-linking of FtsZ protofilaments. Its function overlaps with FtsA. The polypeptide is Cell division protein SepF (Lactococcus lactis subsp. lactis (strain IL1403) (Streptococcus lactis)).